We begin with the raw amino-acid sequence, 914 residues long: Serine/threonine kinase SAD-1 (914 aa).

In terms of domain architecture, Protein kinase spans 47-298 (YKLEKTLGKG…LADVFKHPWV (252 aa)). ATP contacts are provided by residues 53–61 (LGKGQTGLV) and Lys-76. Asp-169 serves as the catalytic Proton acceptor. Disordered regions lie at residues 375 to 551 (AQED…SPPS), 563 to 590 (TMNS…SGPW), and 757 to 914 (NSTQ…ADKV). Over residues 393-402 (PPKKRTDSSR) the composition is skewed to basic and acidic residues. Positions 444-462 (RSSTRDLFGSSSSGSYSAR) are enriched in low complexity. Over residues 473-482 (ASRSTNSYHY) the composition is skewed to polar residues. Positions 495–526 (AARHVRDAQERRESRDSGRGSSRKESKDRSDK) are enriched in basic and acidic residues. Composition is skewed to low complexity over residues 527–551 (SASS…SPPS) and 563–573 (TMNSTNSSTNS). Positions 574–590 (LIAGNSQTSIGSTSGPW) are enriched in polar residues. Positions 780 to 796 (DSSVGSACSDSESNASS) are enriched in low complexity. Residues 823–837 (SMRSVGSGTANSYKS) are compositionally biased toward polar residues. Positions 850–876 (ASSSSASNRYGPSSSSSGSYSNNADYS) are enriched in low complexity. Positions 882–903 (SQRSNGSSAPKNQYSPGSQRSF) are enriched in polar residues.

It belongs to the protein kinase superfamily. CAMK Ser/Thr protein kinase family. SNF1 subfamily. Interacts with strd-1 and nab-1. Mg(2+) serves as cofactor. Expressed in neurons. Colocalizes with strd-1 along the dorsal nerve cord.

Its subcellular location is the synapse. The enzyme catalyses L-seryl-[protein] + ATP = O-phospho-L-seryl-[protein] + ADP + H(+). It carries out the reaction L-threonyl-[protein] + ATP = O-phospho-L-threonyl-[protein] + ADP + H(+). Its function is as follows. Regulates both neuronal polarity and synaptic organization when bound to strd-1. Kinase activity is required for the establishment, but not the maintenance, of both processes. Binding to nab-1 is essential for role in restricting axonal fate during neuronal polarization but is not required for regulating synapse morphology. The polypeptide is Serine/threonine kinase SAD-1 (Caenorhabditis elegans).